A 601-amino-acid chain; its full sequence is uncharacterized protein (601 aa).

Over residues 24–35 (RKSNVVLKKNKG) the composition is skewed to basic residues. Disordered regions lie at residues 24–106 (RKSN…LKLD) and 171–219 (YGND…PREE). The span at 54-81 (SQFSSRDNFRTTQTQASSSSEPSDNTNR) shows a compositional bias: polar residues. Residues 92–106 (TPKKEESNAEKLKLD) show a composition bias toward basic and acidic residues. Residues S236 and S238 each carry the phosphoserine modification. The interval 260-283 (RKRKVLSSSSEDDESSSPEDLLKP) is disordered.

The protein localises to the nucleus. This is an uncharacterized protein from Schizosaccharomyces pombe (strain 972 / ATCC 24843) (Fission yeast).